We begin with the raw amino-acid sequence, 144 residues long: Large ribosomal subunit protein uL15 (144 aa).

Residues 1-58 (MQLNDLRSAPGARREKLRPGRGIGSGLGKTGGRGHKGQTSRSGGKIAPGFEGGQQPLH) form a disordered region. The span at 21 to 31 (RGIGSGLGKTG) shows a compositional bias: gly residues.

This sequence belongs to the universal ribosomal protein uL15 family. In terms of assembly, part of the 50S ribosomal subunit.

In terms of biological role, binds to the 23S rRNA. This is Large ribosomal subunit protein uL15 from Azotobacter vinelandii (strain DJ / ATCC BAA-1303).